The following is a 209-amino-acid chain: MVSLQFITHQTDRYTYFESALMALEGGCKWIQLRMKEAPCEEVEAVALQLKPLCKEKEAILLLDDHVELAKKLEVDGVHLGKKDMPIDQARQLLGEAFIIGGTANTFEDVVQHYRAGADYLGIGPFRFTTTKKNLSPVLGLEGYTAILSQMKEANIELPVVAIGGITREDIPAILETGVNGIALSGTILRAEDPAAETRKILNMKRIIK.

Residues 32-36 (QLRMK) and D64 each bind 4-amino-2-methyl-5-(diphosphooxymethyl)pyrimidine. 2 residues coordinate Mg(2+): D65 and D84. 4-amino-2-methyl-5-(diphosphooxymethyl)pyrimidine is bound at residue T103. 129 to 131 (TTT) serves as a coordination point for 2-[(2R,5Z)-2-carboxy-4-methylthiazol-5(2H)-ylidene]ethyl phosphate. K132 serves as a coordination point for 4-amino-2-methyl-5-(diphosphooxymethyl)pyrimidine. G165 contributes to the 2-[(2R,5Z)-2-carboxy-4-methylthiazol-5(2H)-ylidene]ethyl phosphate binding site.

This sequence belongs to the thiamine-phosphate synthase family. Requires Mg(2+) as cofactor.

The enzyme catalyses 2-[(2R,5Z)-2-carboxy-4-methylthiazol-5(2H)-ylidene]ethyl phosphate + 4-amino-2-methyl-5-(diphosphooxymethyl)pyrimidine + 2 H(+) = thiamine phosphate + CO2 + diphosphate. The catalysed reaction is 2-(2-carboxy-4-methylthiazol-5-yl)ethyl phosphate + 4-amino-2-methyl-5-(diphosphooxymethyl)pyrimidine + 2 H(+) = thiamine phosphate + CO2 + diphosphate. It carries out the reaction 4-methyl-5-(2-phosphooxyethyl)-thiazole + 4-amino-2-methyl-5-(diphosphooxymethyl)pyrimidine + H(+) = thiamine phosphate + diphosphate. The protein operates within cofactor biosynthesis; thiamine diphosphate biosynthesis; thiamine phosphate from 4-amino-2-methyl-5-diphosphomethylpyrimidine and 4-methyl-5-(2-phosphoethyl)-thiazole: step 1/1. In terms of biological role, condenses 4-methyl-5-(beta-hydroxyethyl)thiazole monophosphate (THZ-P) and 2-methyl-4-amino-5-hydroxymethyl pyrimidine pyrophosphate (HMP-PP) to form thiamine monophosphate (TMP). This chain is Thiamine-phosphate synthase, found in Bacteroides thetaiotaomicron (strain ATCC 29148 / DSM 2079 / JCM 5827 / CCUG 10774 / NCTC 10582 / VPI-5482 / E50).